We begin with the raw amino-acid sequence, 278 residues long: Large ribosomal subunit protein uL2c (278 aa).

Residues 222 to 241 (GVVMNPNDHPHGGGEGRSPI) form a disordered region.

This sequence belongs to the universal ribosomal protein uL2 family. In terms of assembly, part of the 50S ribosomal subunit.

Its subcellular location is the plastid. The protein resides in the chloroplast. This chain is Large ribosomal subunit protein uL2c (rpl2), found in Tupiella akineta (Green alga).